The primary structure comprises 87 residues: uncharacterized protein (87 aa).

A helical membrane pass occupies residues G48–F70.

The protein resides in the host membrane. This is an uncharacterized protein from Gallid herpesvirus 2 (strain Chicken/Md5/ATCC VR-987) (GaHV-2).